We begin with the raw amino-acid sequence, 235 residues long: 6-carboxyhexanoate--CoA ligase (235 aa).

This sequence belongs to the BioW family. In terms of assembly, homodimer. Mg(2+) is required as a cofactor.

It carries out the reaction heptanedioate + ATP + CoA = 6-carboxyhexanoyl-CoA + AMP + diphosphate. The protein operates within metabolic intermediate metabolism; pimeloyl-CoA biosynthesis; pimeloyl-CoA from pimelate: step 1/1. Its function is as follows. Catalyzes the transformation of pimelate into pimeloyl-CoA with concomitant hydrolysis of ATP to AMP. This chain is 6-carboxyhexanoate--CoA ligase, found in Desulfovibrio desulfuricans (strain ATCC 27774 / DSM 6949 / MB).